Reading from the N-terminus, the 740-residue chain is Pheromone-regulated membrane protein 10 (740 aa).

Disordered regions lie at residues 1–48 (MGKN…RSGL), 65–97 (FADE…KEEC), and 241–269 (NQPG…PTGE). Positions 7 to 18 (QAAEGEEARRGS) are enriched in basic and acidic residues. The segment covering 19–33 (ESSGSSAEPSGAVAE) has biased composition (low complexity). The segment covering 67-76 (DEDEVVEQDE) has biased composition (acidic residues). A compositionally biased stretch (polar residues) spans 256 to 267 (SAQTLSSETLPT). 10 helical membrane-spanning segments follow: residues 422–442 (AWMC…FAFG), 445–465 (WINL…QFIV), 475–495 (VFEI…GSIP), 499–519 (ICFG…YIIL), 541–561 (IIYS…FGWI), 574–594 (ELSP…LSLI), 599–619 (WSQI…TYWS), 622–642 (HFTA…GIMG), 651–671 (GLAM…GIAS), and 707–727 (ITMI…TLVV).

The protein belongs to the ThrE exporter (TC 2.A.79) family.

The protein localises to the membrane. The sequence is that of Pheromone-regulated membrane protein 10 from Eremothecium gossypii (strain ATCC 10895 / CBS 109.51 / FGSC 9923 / NRRL Y-1056) (Yeast).